We begin with the raw amino-acid sequence, 283 residues long: Alkaline ceramidase (283 aa).

5 residues coordinate Ca(2+): aspartate 28, tryptophan 29, glutamate 31, asparagine 33, and glutamate 42. The next 2 membrane-spanning stretches (helical) occupy residues 43–63 and 69–89; these read FVNTFSNFLFILLPPVLIMLF and FVTPGIHVIWVLLIVVGLSSM. Histidine 92 lines the Zn(2+) pocket. 4 helical membrane passes run 98-118, 134-151, 154-174, and 187-209; these read IGQLLDELAILWVFMAAFSLF, TFSWLMLLSAIAATGLSW, PIVNAFVLMFMSVPTMVMLYT, and LGIRSTTVWAVAVFCWINDRIFC. Zn(2+) contacts are provided by histidine 221 and histidine 225. A helical membrane pass occupies residues 222 to 242; it reads GFWHIFIFIAAYTVLVLFAYF.

This sequence belongs to the alkaline ceramidase family. Requires Zn(2+) as cofactor. As to expression, expressed in the central midgut of late embryos. In brain, it is present at the interhemispheric junction and in groups of cells in the central brain.

It is found in the membrane. The catalysed reaction is an N-acylsphing-4-enine + H2O = sphing-4-enine + a fatty acid. In terms of biological role, hydrolyzes the sphingolipid ceramide into sphingosine and free fatty acid. The chain is Alkaline ceramidase (bwa) from Drosophila melanogaster (Fruit fly).